Reading from the N-terminus, the 283-residue chain is MGNSALDLNPPNATFHLSTHGSDWLWAAFSVFGVSLLTVVAWTFTRPRGARLFHQIAIVVLTTGSLAYFSMASDLGATPVPVEFRGEGTRQIWFVRYIQWFITFPLLLLELLLATGLSLSDIFTTLFMSIVLVITGLVAALVPSTYKWGYYTFGVSALFYIWYVLLWHGPHTTFAAGGVLRRGYILAAGYLSFLLLLYPIAWACAEGGNVISVTSEMIWYGILDIFAGPIFLFFFLWELRGVDYATFGLHSGKYTDKSAYAPNTAQAAGTVPATTSTGAAGNV.

Helical transmembrane passes span 24–44 (WLWAAFSVFGVSLLTVVAWTF), 52–72 (LFHQIAIVVLTTGSLAYFSMA), 97–117 (YIQWFITFPLLLLELLLATGL), 122–142 (IFTTLFMSIVLVITGLVAALV), 148–168 (WGYYTFGVSALFYIWYVLLWH), 185–205 (ILAAGYLSFLLLLYPIAWACA), and 217–237 (MIWYGILDIFAGPIFLFFFLW).

Belongs to the archaeal/bacterial/fungal opsin family.

It is found in the membrane. The chain is Protein FDD123 (FDD123) from Trametes versicolor (White-rot fungus).